A 357-amino-acid chain; its full sequence is uncharacterized protein (357 aa).

Residues 6–32 (CIVCRQKKIKCDRKNPCTNCEQAGEKC) constitute a DNA-binding region (zn(2)-C6 fungal-type).

It localises to the nucleus. This is an uncharacterized protein from Schizosaccharomyces pombe (strain 972 / ATCC 24843) (Fission yeast).